The primary structure comprises 77 residues: UPF0349 protein lin2491 (77 aa).

This sequence belongs to the UPF0349 family.

This Listeria innocua serovar 6a (strain ATCC BAA-680 / CLIP 11262) protein is UPF0349 protein lin2491.